A 137-amino-acid polypeptide reads, in one-letter code: Small ribosomal subunit protein uS12 (137 aa).

Residues 1–57 are disordered; sequence MPTINQLIRKGRKSKGSKSNSPALNFGYNSYKKVQTNNSAPQKRGVATRVGTMTPKK. Over residues 32–41 the composition is skewed to polar residues; sequence KKVQTNNSAP. At Asp-102 the chain carries 3-methylthioaspartic acid.

The protein belongs to the universal ribosomal protein uS12 family. Part of the 30S ribosomal subunit. Contacts proteins S8 and S17. May interact with IF1 in the 30S initiation complex.

Functionally, with S4 and S5 plays an important role in translational accuracy. In terms of biological role, interacts with and stabilizes bases of the 16S rRNA that are involved in tRNA selection in the A site and with the mRNA backbone. Located at the interface of the 30S and 50S subunits, it traverses the body of the 30S subunit contacting proteins on the other side and probably holding the rRNA structure together. The combined cluster of proteins S8, S12 and S17 appears to hold together the shoulder and platform of the 30S subunit. The polypeptide is Small ribosomal subunit protein uS12 (Ligilactobacillus salivarius (strain UCC118) (Lactobacillus salivarius)).